Reading from the N-terminus, the 445-residue chain is Phosphoglucosamine mutase (445 aa).

Residue serine 99 is the Phosphoserine intermediate of the active site. Residues serine 99, aspartate 242, aspartate 244, and aspartate 246 each coordinate Mg(2+). At serine 99 the chain carries Phosphoserine.

This sequence belongs to the phosphohexose mutase family. It depends on Mg(2+) as a cofactor. Post-translationally, activated by phosphorylation.

The catalysed reaction is alpha-D-glucosamine 1-phosphate = D-glucosamine 6-phosphate. Catalyzes the conversion of glucosamine-6-phosphate to glucosamine-1-phosphate. In Helicobacter pylori (strain G27), this protein is Phosphoglucosamine mutase.